A 165-amino-acid chain; its full sequence is Large ribosomal subunit protein uL10 (165 aa).

Belongs to the universal ribosomal protein uL10 family. As to quaternary structure, part of the ribosomal stalk of the 50S ribosomal subunit. The N-terminus interacts with L11 and the large rRNA to form the base of the stalk. The C-terminus forms an elongated spine to which L12 dimers bind in a sequential fashion forming a multimeric L10(L12)X complex.

Its function is as follows. Forms part of the ribosomal stalk, playing a central role in the interaction of the ribosome with GTP-bound translation factors. The sequence is that of Large ribosomal subunit protein uL10 from Burkholderia ambifaria (strain MC40-6).